A 447-amino-acid chain; its full sequence is Cytochrome P450 BJ-4 (447 aa).

Position 392 (Cys-392) interacts with heme.

It belongs to the cytochrome P450 family. Heme serves as cofactor.

Functionally, cytochromes P450 are a group of heme-thiolate monooxygenases. They oxidize a variety of structurally unrelated compounds, including steroids, fatty acids, and xenobiotics. In Bradyrhizobium diazoefficiens (strain JCM 10833 / BCRC 13528 / IAM 13628 / NBRC 14792 / USDA 110), this protein is Cytochrome P450 BJ-4 (cyp117).